Here is a 455-residue protein sequence, read N- to C-terminus: UDP-N-acetylmuramoylalanine--D-glutamate ligase (455 aa).

Residue 119–125 (GTNGKTT) coordinates ATP.

This sequence belongs to the MurCDEF family.

The protein resides in the cytoplasm. The catalysed reaction is UDP-N-acetyl-alpha-D-muramoyl-L-alanine + D-glutamate + ATP = UDP-N-acetyl-alpha-D-muramoyl-L-alanyl-D-glutamate + ADP + phosphate + H(+). It participates in cell wall biogenesis; peptidoglycan biosynthesis. Cell wall formation. Catalyzes the addition of glutamate to the nucleotide precursor UDP-N-acetylmuramoyl-L-alanine (UMA). In Listeria innocua serovar 6a (strain ATCC BAA-680 / CLIP 11262), this protein is UDP-N-acetylmuramoylalanine--D-glutamate ligase.